The primary structure comprises 360 residues: Protein Wnt-2 (360 aa).

Residues 1–25 form the signal peptide; that stretch reads MNVPLGGIWLWLPLLLTWLTPEVSS. 11 cysteine pairs are disulfide-bonded: C76–C87, C127–C135, C137–C157, C206–C220, C208–C215, C278–C309, C294–C304, C308–C348, C324–C339, C326–C336, and C331–C332. S212 is lipidated: O-palmitoleoyl serine; by PORCN. N295 carries N-linked (GlcNAc...) asparagine glycosylation.

The protein belongs to the Wnt family. Palmitoleoylation is required for efficient binding to frizzled receptors. Depalmitoleoylation leads to Wnt signaling pathway inhibition. In embryos in the developing allantois, pericardium heart, and ventral-lateral mesoderm; in adults in lung, brain, heart and placenta.

Its subcellular location is the secreted. It localises to the extracellular space. It is found in the extracellular matrix. In terms of biological role, ligand for members of the frizzled family of seven transmembrane receptors. Functions in the canonical Wnt/beta-catenin signaling pathway. Functions as a upstream regulator of FGF10 expression. Plays an important role in embryonic lung development. May contribute to embryonic brain development by regulating the proliferation of dopaminergic precursors and neurons. This Mus musculus (Mouse) protein is Protein Wnt-2 (Wnt2).